The following is a 215-amino-acid chain: Cytochrome b6 (215 aa).

A helical transmembrane segment spans residues 32-52 (IFYCLGGITFTCFLVQVATGF). Residue Cys35 coordinates heme c. Residues His86 and His100 each coordinate heme b. The next 3 membrane-spanning stretches (helical) occupy residues 90-110 (ASMM…TGGF), 116-136 (LTWT…VTGY), and 186-206 (LHTF…FLMI). Heme b is bound by residues His187 and His202.

This sequence belongs to the cytochrome b family. PetB subfamily. As to quaternary structure, the 4 large subunits of the cytochrome b6-f complex are cytochrome b6, subunit IV (17 kDa polypeptide, PetD), cytochrome f and the Rieske protein, while the 4 small subunits are PetG, PetL, PetM and PetN. The complex functions as a dimer. Heme b serves as cofactor. Requires heme c as cofactor.

Its subcellular location is the plastid. The protein localises to the chloroplast thylakoid membrane. Component of the cytochrome b6-f complex, which mediates electron transfer between photosystem II (PSII) and photosystem I (PSI), cyclic electron flow around PSI, and state transitions. In Stigeoclonium helveticum (Green alga), this protein is Cytochrome b6.